The following is a 762-amino-acid chain: MTTPAQAPREEVSLSPSLASPPLMALPPPQPSFPGDNATSPTREPTNGNPPETTNTPAQSSPPPETPLSSPPPEPSPPSPSLTGPPPTTIPVSPPPEPSPPPPLPTEAPPPANPVSSPPPESSPPPPPPTEAPPTTPITSPSPPTNPPPPPESPPSLPAPDPPSNPLPPPKLVPPSHSPPRHLPSPPASEIPPPPRHLPSPPASERPSTPPSDSEHPSPPPPGHPKRREQPPPPGSKRPTPSPPSPSDSKRPVHPSPPSPPEETLPPPKPSPDPLPSNSSSPPTLLPPSSVVSPPSPPRKSVSGPDNPSPNNPTPVTDNSSSSGISIAAVVGVSIGVALVLLTLIGVVVCCLKKRKKRLSTIGGGYVMPTPMESSSPRSDSALLKTQSSAPLVGNRSSNRTYLSQSEPGGFGQSRELFSYEELVIATNGFSDENLLGEGGFGRVYKGVLPDERVVAVKQLKIGGGQGDREFKAEVDTISRVHHRNLLSMVGYCISENRRLLIYDYVPNNNLYFHLHAAGTPGLDWATRVKIAAGAARGLAYLHEDCHPRIIHRDIKSSNILLENNFHALVSDFGLAKLALDCNTHITTRVMGTFGYMAPEYASSGKLTEKSDVFSFGVVLLELITGRKPVDASQPLGDESLVEWARPLLSNATETEEFTALADPKLGRNYVGVEMFRMIEAAAACIRHSATKRPRMSQIVRAFDSLAEEDLTNGMRLGESEIINSAQQSAEIRLFRRMAFGSQNYSTDSLTRNSYISKDENL.

A disordered region spans residues 1–322 (MTTPAQAPRE…PTPVTDNSSS (322 aa)). Residues 1–328 (MTTPAQAPRE…NSSSSGISIA (328 aa)) are Extracellular-facing. A compositionally biased stretch (low complexity) spans 13–23 (SLSPSLASPPL). Asparagine 37 carries an N-linked (GlcNAc...) asparagine glycan. A compositionally biased stretch (low complexity) spans 41 to 57 (PTREPTNGNPPETTNTP). Composition is skewed to pro residues over residues 60–210 (SSPP…PSTP), 231–246 (PPPPGSKRPTPSPPSP), and 254–275 (HPSPPSPPEETLPPPKPSPDPL). Positions 276–305 (PSNSSSPPTLLPPSSVVSPPSPPRKSVSGP) are enriched in low complexity. 2 N-linked (GlcNAc...) asparagine glycosylation sites follow: asparagine 278 and asparagine 319. A helical membrane pass occupies residues 329-349 (AVVGVSIGVALVLLTLIGVVV). Residues 350–762 (CCLKKRKKRL…NSYISKDENL (413 aa)) are Cytoplasmic-facing. A disordered region spans residues 370–410 (TPMESSSPRSDSALLKTQSSAPLVGNRSSNRTYLSQSEPGG). The segment covering 372–407 (MESSSPRSDSALLKTQSSAPLVGNRSSNRTYLSQSE) has biased composition (polar residues). Residues 430–706 (FSDENLLGEG…SQIVRAFDSL (277 aa)) form the Protein kinase domain. ATP-binding positions include 436–444 (LGEGGFGRV) and lysine 458. The active-site Proton acceptor is aspartate 554.

It belongs to the protein kinase superfamily. Ser/Thr protein kinase family. Interacts with KIPK1 and KIPK2 (via its cytosolic domain). In terms of tissue distribution, mostly expressed in inflorescence bolts and flower buds, and, to a lower extent, in roots, seedlings, leaves and siliques.

It localises to the cell membrane. It carries out the reaction L-seryl-[protein] + ATP = O-phospho-L-seryl-[protein] + ADP + H(+). It catalyses the reaction L-threonyl-[protein] + ATP = O-phospho-L-threonyl-[protein] + ADP + H(+). In terms of biological role, could be involved in the negative regulation of root growth. This Arabidopsis thaliana (Mouse-ear cress) protein is Proline-rich receptor-like protein kinase PERK10 (PERK10).